The primary structure comprises 51 residues: UPF0391 membrane protein Psyc_0130 (51 aa).

A run of 2 helical transmembrane segments spans residues 6 to 26 (IIFA…VAGL) and 28 to 47 (ANFA…VAFV).

Belongs to the UPF0391 family.

It is found in the cell membrane. In Psychrobacter arcticus (strain DSM 17307 / VKM B-2377 / 273-4), this protein is UPF0391 membrane protein Psyc_0130.